The following is a 589-amino-acid chain: Threonine--tRNA ligase (589 aa).

The catalytic stretch occupies residues 191-487 (DHRKIGKNLG…LLEQTKGNFP (297 aa)). Residues Cys284, His335, and His464 each coordinate Zn(2+).

Belongs to the class-II aminoacyl-tRNA synthetase family. As to quaternary structure, homodimer. The cofactor is Zn(2+).

The protein localises to the cytoplasm. The enzyme catalyses tRNA(Thr) + L-threonine + ATP = L-threonyl-tRNA(Thr) + AMP + diphosphate + H(+). Its function is as follows. Catalyzes the attachment of threonine to tRNA(Thr) in a two-step reaction: L-threonine is first activated by ATP to form Thr-AMP and then transferred to the acceptor end of tRNA(Thr). Also edits incorrectly charged L-seryl-tRNA(Thr). This is Threonine--tRNA ligase from Mycoplasmopsis pulmonis (strain UAB CTIP) (Mycoplasma pulmonis).